We begin with the raw amino-acid sequence, 83 residues long: MSGTKKVGSAGRFGARYGLKIRRRVAAVEAKMRQKHTCPVCGRKAVKRISTGIWQCQKCGATFAGGAYLPVTPAGKAVRRITE.

Positions 38, 41, 56, and 59 each coordinate Zn(2+). A C4-type zinc finger spans residues 38 to 59 (CPVCGRKAVKRISTGIWQCQKC).

The protein belongs to the eukaryotic ribosomal protein eL43 family. Putative zinc-binding subfamily. In terms of assembly, part of the 50S ribosomal subunit. It depends on Zn(2+) as a cofactor.

Binds to the 23S rRNA. The protein is Large ribosomal subunit protein eL43 of Pyrococcus furiosus (strain ATCC 43587 / DSM 3638 / JCM 8422 / Vc1).